The chain runs to 163 residues: Crossover junction endodeoxyribonuclease RuvC (163 aa).

Catalysis depends on residues Asp-9, Glu-76, and Asp-148. Mg(2+) contacts are provided by Asp-9, Glu-76, and Asp-148.

It belongs to the RuvC family. As to quaternary structure, homodimer which binds Holliday junction (HJ) DNA. The HJ becomes 2-fold symmetrical on binding to RuvC with unstacked arms; it has a different conformation from HJ DNA in complex with RuvA. In the full resolvosome a probable DNA-RuvA(4)-RuvB(12)-RuvC(2) complex forms which resolves the HJ. Requires Mg(2+) as cofactor.

The protein resides in the cytoplasm. It carries out the reaction Endonucleolytic cleavage at a junction such as a reciprocal single-stranded crossover between two homologous DNA duplexes (Holliday junction).. Its function is as follows. The RuvA-RuvB-RuvC complex processes Holliday junction (HJ) DNA during genetic recombination and DNA repair. Endonuclease that resolves HJ intermediates. Cleaves cruciform DNA by making single-stranded nicks across the HJ at symmetrical positions within the homologous arms, yielding a 5'-phosphate and a 3'-hydroxyl group; requires a central core of homology in the junction. The consensus cleavage sequence is 5'-(A/T)TT(C/G)-3'. Cleavage occurs on the 3'-side of the TT dinucleotide at the point of strand exchange. HJ branch migration catalyzed by RuvA-RuvB allows RuvC to scan DNA until it finds its consensus sequence, where it cleaves and resolves the cruciform DNA. The polypeptide is Crossover junction endodeoxyribonuclease RuvC (Trichodesmium erythraeum (strain IMS101)).